We begin with the raw amino-acid sequence, 365 residues long: Chorismate synthase (365 aa).

Residues 41–51 show a composition bias toward basic and acidic residues; it reads IQKELDRRRPG. A disordered region spans residues 41–62; sequence IQKELDRRRPGQSEVSTPRSEA. NADP(+) is bound at residue Arg-48. FMN contacts are provided by residues 125 to 127, Gly-285, 300 to 304, and Arg-327; these read RSS and KPTPS.

Belongs to the chorismate synthase family. It depends on FMNH2 as a cofactor.

The enzyme catalyses 5-O-(1-carboxyvinyl)-3-phosphoshikimate = chorismate + phosphate. Its pathway is metabolic intermediate biosynthesis; chorismate biosynthesis; chorismate from D-erythrose 4-phosphate and phosphoenolpyruvate: step 7/7. Functionally, catalyzes the anti-1,4-elimination of the C-3 phosphate and the C-6 proR hydrogen from 5-enolpyruvylshikimate-3-phosphate (EPSP) to yield chorismate, which is the branch point compound that serves as the starting substrate for the three terminal pathways of aromatic amino acid biosynthesis. This reaction introduces a second double bond into the aromatic ring system. This chain is Chorismate synthase, found in Methanosarcina mazei (strain ATCC BAA-159 / DSM 3647 / Goe1 / Go1 / JCM 11833 / OCM 88) (Methanosarcina frisia).